The following is a 786-amino-acid chain: Digalactosyldiacylglycerol synthase 1, chloroplastic (786 aa).

The transit peptide at 1–25 (MASQRQPPSSSNAFSFLSKGWREVR) directs the protein to the chloroplast.

This sequence belongs to the glycosyltransferase group 1 family. Glycosyltransferase 4 subfamily. As to expression, high expression in nodules infected cells, but low in nodule inner cortex and root central cylinder.

Its subcellular location is the plastid. The protein localises to the chloroplast outer membrane. It localises to the plastid outer membrane. It catalyses the reaction a 1,2-diacyl-3-O-(beta-D-galactosyl)-sn-glycerol + UDP-alpha-D-galactose = a 1,2-diacyl-3-O-[alpha-D-galactosyl-(1-&gt;6)-beta-D-galactosyl]-sn-glycerol + UDP + H(+). Functionally, involved in the synthesis of diacylglycerol galactolipids that are specifically found in thylakoid and in nodule peribacteroid membranes. Specific for alpha-glycosidic linkages. This Lotus japonicus (Lotus corniculatus var. japonicus) protein is Digalactosyldiacylglycerol synthase 1, chloroplastic.